Here is a 117-residue protein sequence, read N- to C-terminus: Large-conductance mechanosensitive channel (117 aa).

The next 3 membrane-spanning stretches (helical) occupy residues 7–27 (EFAL…GAAF), 30–50 (IVTS…FGSV), and 64–84 (GLFI…FIFV).

Belongs to the MscL family. As to quaternary structure, homopentamer.

Its subcellular location is the cell membrane. Functionally, channel that opens in response to stretch forces in the membrane lipid bilayer. May participate in the regulation of osmotic pressure changes within the cell. The chain is Large-conductance mechanosensitive channel from Staphylococcus haemolyticus (strain JCSC1435).